Reading from the N-terminus, the 274-residue chain is Prolyl 4-hydroxylase 13 (274 aa).

Topologically, residues 1 to 10 (MRSYGKEKKL) are cytoplasmic. A helical; Signal-anchor for type II membrane protein membrane pass occupies residues 11–31 (VFPYVFIACCFFLAIFGFCFF). Residues 32–274 (NLFSQGISFS…TKWIRDQTYD (243 aa)) lie on the Lumenal side of the membrane. The Fe2OG dioxygenase domain maps to 151-270 (YYESFNILRY…KWVATKWIRD (120 aa)). Fe cation is bound by residues His169 and Asp171. Asn242 carries an N-linked (GlcNAc...) asparagine glycan. Fe cation is bound at residue His251. A 2-oxoglutarate-binding site is contributed by Lys261.

The protein belongs to the P4HA family. Fe(2+) is required as a cofactor. L-ascorbate serves as cofactor. In terms of tissue distribution, expressed in epidermal root hair cells (trichoblasts) root hairless cells (atrichoblasts).

The protein localises to the endoplasmic reticulum membrane. It catalyses the reaction L-prolyl-[collagen] + 2-oxoglutarate + O2 = trans-4-hydroxy-L-prolyl-[collagen] + succinate + CO2. Functionally, catalyzes the post-translational formation of 4-hydroxyproline in -Xaa-Pro-Gly- sequences in proline-rich peptide sequences of plant glycoproteins and other proteins. Hydroxyprolines are important constituent of many plant cell wall glycoproteins such as extensins, hydroxyproline-rich glycoproteins, lectins and arabinogalactan proteins. Possesses high affinity for leucine-rich repeat and proline-rich extensins of root cell walls that are essential for root hair development. Hydroxyprolines define the subsequent O-glycosylation sites by arabinosyltransferases which elongate the O-arabinosides on extensins. The protein is Prolyl 4-hydroxylase 13 of Arabidopsis thaliana (Mouse-ear cress).